Reading from the N-terminus, the 343-residue chain is MIEVGIVGGTGYTGVELLRLLARHPEARLRVITSRGNAGTRVDELFPSLRGEVELAFSEPDVDRLAACDLVFFATPNGTAMQMVPDLLARDTRVVDLGADFRLKDVETWSRWYGMTHACPELVAEAAYGLPELNREAIRGARLVANPGCYPTAVGLGWLPLLEAGLVETRGLVASCVSGASGAGRAANVATLLCEVNESFKAYGADGHRHLPEIRQSLAQVAGGAVELTFVPHLVPMTRGMHASLYATLRGDAGDLQVLFEQRYADEPFVDVLPAGAHPETRTVRGTNLCRLAVRRAPESDQVIVLSVIDNLTKGAAGQAVQNMNLMFGLPETAGLDAPAVLP.

The active site involves C149.

Belongs to the NAGSA dehydrogenase family. Type 1 subfamily.

It localises to the cytoplasm. The catalysed reaction is N-acetyl-L-glutamate 5-semialdehyde + phosphate + NADP(+) = N-acetyl-L-glutamyl 5-phosphate + NADPH + H(+). The protein operates within amino-acid biosynthesis; L-arginine biosynthesis; N(2)-acetyl-L-ornithine from L-glutamate: step 3/4. Its function is as follows. Catalyzes the NADPH-dependent reduction of N-acetyl-5-glutamyl phosphate to yield N-acetyl-L-glutamate 5-semialdehyde. This chain is N-acetyl-gamma-glutamyl-phosphate reductase, found in Alkalilimnicola ehrlichii (strain ATCC BAA-1101 / DSM 17681 / MLHE-1).